Here is a 307-residue protein sequence, read N- to C-terminus: tRNA N(3)-methylcytidine methyltransferase trm140 (307 aa).

S-adenosyl-L-methionine is bound by residues W83, Y87, G125, D150, D176, L177, and I197.

Belongs to the methyltransferase superfamily. METL family.

The enzyme catalyses cytidine(32) in tRNA(Thr) + S-adenosyl-L-methionine = N(3)-methylcytidine(32) in tRNA(Thr) + S-adenosyl-L-homocysteine + H(+). Its function is as follows. S-adenosyl-L-methionine-dependent methyltransferase that mediates N(3)-methylcytidine modification of residue 32 of the tRNA anticodon loop of tRNA(Thr). Does not catalyze N(3)-methylcytidine modification of tRNA(Ser). The chain is tRNA N(3)-methylcytidine methyltransferase trm140 from Schizosaccharomyces pombe (strain 972 / ATCC 24843) (Fission yeast).